Reading from the N-terminus, the 958-residue chain is Coiled-coil domain-containing protein 33 (958 aa).

Residues 214-353 (SPEEPLIASQ…LVKPTESGKA (140 aa)) enclose the C2 domain. A compositionally biased stretch (polar residues) spans 602-617 (SKDTVSSTMDLSTSTP). A disordered region spans residues 602–628 (SKDTVSSTMDLSTSTPREAEEEPLVPE). Coiled-coil stretches lie at residues 632–774 (DTEM…LEDR) and 859–899 (FNLL…RLQE). Residues 899-958 (EQEKGFRHPSNSIIIEQPSALTHSMDLKQPSELEPLLPSSDSKLNKPLSPQKETANSQQT) are disordered. Composition is skewed to polar residues over residues 907–920 (PSNSIIIEQPSALT) and 949–958 (QKETANSQQT).

This Homo sapiens (Human) protein is Coiled-coil domain-containing protein 33 (CCDC33).